Consider the following 950-residue polypeptide: Leucine--tRNA ligase (950 aa).

The 'HIGH' region motif lies at 42-52 (PYLNGNLHAGH). Residues 629–633 (KMSKS) carry the 'KMSKS' region motif. Lys-632 is an ATP binding site. Residues 928–950 (NPPYDPKGRAQNAEPGRPAIYIE) form a disordered region.

It belongs to the class-I aminoacyl-tRNA synthetase family.

The protein resides in the cytoplasm. It catalyses the reaction tRNA(Leu) + L-leucine + ATP = L-leucyl-tRNA(Leu) + AMP + diphosphate. In Methanothrix thermoacetophila (strain DSM 6194 / JCM 14653 / NBRC 101360 / PT) (Methanosaeta thermophila), this protein is Leucine--tRNA ligase.